A 674-amino-acid chain; its full sequence is YAP1-binding protein 1 (674 aa).

The protein belongs to the YBP1 family. In terms of assembly, interacts with YAP1. Forms a peroxide stress induced complex with YAP1 in the cytoplasm. Systematic proteome-wide 2-hybrid interaction studies suggest that YAP1, HYR1/GPX3, and YBP1 all interact with the nuclear pore complex subunit NUP116, which is involved in nucleocytoplasmic transport.

It is found in the cytoplasm. Its function is as follows. Involved in oxidative stress response and redox homeostasis. Required for hydrogen peroxide-induced oxidation and nuclear localization (activation) of YAP1. Functions probably in concert with HYP1/GPX3, the actual YAP1 modifying enzyme. YBP1 is not required for HYP1/GPX3-independent, diamide-induced oxidation of YAP1. This chain is YAP1-binding protein 1, found in Saccharomyces cerevisiae (strain ATCC 204508 / S288c) (Baker's yeast).